The sequence spans 377 residues: Alkane 1-monooxygenase 2 (377 aa).

The next 4 membrane-spanning stretches (helical) occupy residues 17–37 (GYWI…WSLG), 43–63 (AWPW…DAIV), 87–107 (VLSL…GWIL), and 116–136 (VGQL…GITV). Fe cation contacts are provided by His138, His142, His168, His172, and His173. A helical transmembrane segment spans residues 236–256 (ALFLLGFSLAFGWLGAIFFLG). Fe cation is bound by residues His312, His315, and His316.

This sequence belongs to the fatty acid desaturase type 1 family. AlkB subfamily. Requires Fe(3+) as cofactor.

It localises to the cell inner membrane. It catalyses the reaction octane + 2 reduced [rubredoxin] + O2 + 2 H(+) = 2 oxidized [rubredoxin] + octan-1-ol + H2O. Its pathway is hydrocarbon metabolism; alkane degradation. Its function is as follows. Catalyzes the hydroxylation of n-alkanes in the presence of a NADH-rubredoxin reductase and rubredoxin. It preferably hydroxylases C12-C20 hydrocarbons. This chain is Alkane 1-monooxygenase 2 (alkB2), found in Pseudomonas aeruginosa (strain ATCC 15692 / DSM 22644 / CIP 104116 / JCM 14847 / LMG 12228 / 1C / PRS 101 / PAO1).